The primary structure comprises 126 residues: Small ribosomal subunit protein uS13 (126 aa).

The interval 92–126 is disordered; the sequence is HRRGLPVRGQRTKTNARTRKGPKRTVAGKKKAGRK.

The protein belongs to the universal ribosomal protein uS13 family. In terms of assembly, part of the 30S ribosomal subunit. Forms a loose heterodimer with protein S19. Forms two bridges to the 50S subunit in the 70S ribosome.

Located at the top of the head of the 30S subunit, it contacts several helices of the 16S rRNA. In the 70S ribosome it contacts the 23S rRNA (bridge B1a) and protein L5 of the 50S subunit (bridge B1b), connecting the 2 subunits; these bridges are implicated in subunit movement. Contacts the tRNAs in the A and P-sites. The sequence is that of Small ribosomal subunit protein uS13 from Kineococcus radiotolerans (strain ATCC BAA-149 / DSM 14245 / SRS30216).